A 150-amino-acid chain; its full sequence is 1,4-dihydroxy-2-naphthoyl-CoA hydrolase (150 aa).

Residue D19 is part of the active site.

This sequence belongs to the 4-hydroxybenzoyl-CoA thioesterase family. DHNA-CoA hydrolase subfamily.

The enzyme catalyses 1,4-dihydroxy-2-naphthoyl-CoA + H2O = 1,4-dihydroxy-2-naphthoate + CoA + H(+). It participates in cofactor biosynthesis; phylloquinone biosynthesis. It functions in the pathway quinol/quinone metabolism; 1,4-dihydroxy-2-naphthoate biosynthesis; 1,4-dihydroxy-2-naphthoate from chorismate: step 7/7. In terms of biological role, catalyzes the hydrolysis of 1,4-dihydroxy-2-naphthoyl-CoA (DHNA-CoA) to 1,4-dihydroxy-2-naphthoate (DHNA), a reaction involved in phylloquinone (vitamin K1) biosynthesis. This chain is 1,4-dihydroxy-2-naphthoyl-CoA hydrolase, found in Prochlorococcus marinus (strain MIT 9515).